We begin with the raw amino-acid sequence, 866 residues long: Probable outer membrane usher protein ElfC (866 aa).

Residues 1 to 35 (MYRTHRQHSLLSSGGVPSFIGGLVVFVSAAFNAQA) form the signal peptide.

Belongs to the fimbrial export usher family.

The protein localises to the cell outer membrane. Its function is as follows. Part of the elfADCG fimbrial operon, which could be required for adherence to host epithelial cells. Could be involved in the export and assembly of the ElfA fimbrial subunits across the outer membrane. The sequence is that of Probable outer membrane usher protein ElfC (elfC) from Escherichia coli O157:H7.